The following is a 94-amino-acid chain: Co-chaperonin GroES (94 aa).

It belongs to the GroES chaperonin family. In terms of assembly, heptamer of 7 subunits arranged in a ring. Interacts with the chaperonin GroEL.

Its subcellular location is the cytoplasm. Its function is as follows. Together with the chaperonin GroEL, plays an essential role in assisting protein folding. The GroEL-GroES system forms a nano-cage that allows encapsulation of the non-native substrate proteins and provides a physical environment optimized to promote and accelerate protein folding. GroES binds to the apical surface of the GroEL ring, thereby capping the opening of the GroEL channel. In Staphylococcus epidermidis (strain ATCC 35984 / DSM 28319 / BCRC 17069 / CCUG 31568 / BM 3577 / RP62A), this protein is Co-chaperonin GroES.